Consider the following 968-residue polypeptide: Protein translocase subunit SecA (968 aa).

ATP contacts are provided by residues Gln86, 104-108 (GEGKT), and Asp494. Residues 835 to 968 (PAESAEESTD…RAAKAAKKRR (134 aa)) form a disordered region. Low complexity-rich tracts occupy residues 883–892 (ARVATRPAAE) and 910–923 (SAPS…FSEG). Residues 956-968 (ARRRAAKAAKKRR) are compositionally biased toward basic residues.

The protein belongs to the SecA family. As to quaternary structure, monomer and homodimer. Part of the essential Sec protein translocation apparatus which comprises SecA, SecYEG and auxiliary proteins SecDF. Other proteins may also be involved.

It is found in the cell membrane. It localises to the cytoplasm. It catalyses the reaction ATP + H2O + cellular proteinSide 1 = ADP + phosphate + cellular proteinSide 2.. Its function is as follows. Part of the Sec protein translocase complex. Interacts with the SecYEG preprotein conducting channel. Has a central role in coupling the hydrolysis of ATP to the transfer of proteins into and across the cell membrane, serving as an ATP-driven molecular motor driving the stepwise translocation of polypeptide chains across the membrane. This is Protein translocase subunit SecA from Beutenbergia cavernae (strain ATCC BAA-8 / DSM 12333 / CCUG 43141 / JCM 11478 / NBRC 16432 / NCIMB 13614 / HKI 0122).